A 439-amino-acid polypeptide reads, in one-letter code: Casein kinase I homolog 3 (439 aa).

Positions 15 to 286 constitute a Protein kinase domain; it reads YRVGKKIGEG…LRSLFDSLLL (272 aa). ATP-binding positions include 21–29 and K44; that span reads IGEGSFGML. D134 serves as the catalytic Proton acceptor. Positions 366 to 426 are disordered; that stretch reads DGIPGKAASP…PSKEKSRKKF (61 aa). Low complexity predominate over residues 372-413; sequence AASPQVQQQQQTSSAQQQQPQRVEQPAPQTTQPTQVDTQQAA.

Belongs to the protein kinase superfamily. CK1 Ser/Thr protein kinase family. Casein kinase I subfamily.

It is found in the cytoplasm. The enzyme catalyses L-seryl-[protein] + ATP = O-phospho-L-seryl-[protein] + ADP + H(+). The catalysed reaction is L-threonyl-[protein] + ATP = O-phospho-L-threonyl-[protein] + ADP + H(+). Its function is as follows. Casein kinases are operationally defined by their preferential utilization of acidic proteins such as caseins as substrates. In Schizosaccharomyces pombe (strain 972 / ATCC 24843) (Fission yeast), this protein is Casein kinase I homolog 3 (cki3).